Consider the following 503-residue polypeptide: Probable cytosol aminopeptidase (503 aa).

Positions 270 and 275 each coordinate Mn(2+). Residue lysine 282 is part of the active site. Mn(2+) contacts are provided by aspartate 293, aspartate 352, and glutamate 354. Arginine 356 is an active-site residue.

This sequence belongs to the peptidase M17 family. Requires Mn(2+) as cofactor.

The protein resides in the cytoplasm. The enzyme catalyses Release of an N-terminal amino acid, Xaa-|-Yaa-, in which Xaa is preferably Leu, but may be other amino acids including Pro although not Arg or Lys, and Yaa may be Pro. Amino acid amides and methyl esters are also readily hydrolyzed, but rates on arylamides are exceedingly low.. It carries out the reaction Release of an N-terminal amino acid, preferentially leucine, but not glutamic or aspartic acids.. Functionally, presumably involved in the processing and regular turnover of intracellular proteins. Catalyzes the removal of unsubstituted N-terminal amino acids from various peptides. The protein is Probable cytosol aminopeptidase of Yersinia enterocolitica serotype O:8 / biotype 1B (strain NCTC 13174 / 8081).